Here is a 265-residue protein sequence, read N- to C-terminus: Hydroxyethylthiazole kinase 2 (265 aa).

Met-39 is a binding site for substrate. Residues Lys-115 and Thr-168 each contribute to the ATP site. Gly-195 is a substrate binding site.

This sequence belongs to the Thz kinase family. The cofactor is Mg(2+).

It carries out the reaction 5-(2-hydroxyethyl)-4-methylthiazole + ATP = 4-methyl-5-(2-phosphooxyethyl)-thiazole + ADP + H(+). Its pathway is cofactor biosynthesis; thiamine diphosphate biosynthesis; 4-methyl-5-(2-phosphoethyl)-thiazole from 5-(2-hydroxyethyl)-4-methylthiazole: step 1/1. In terms of biological role, catalyzes the phosphorylation of the hydroxyl group of 4-methyl-5-beta-hydroxyethylthiazole (THZ). The protein is Hydroxyethylthiazole kinase 2 of Clostridium botulinum (strain Kyoto / Type A2).